The following is a 148-amino-acid chain: D-aminoacyl-tRNA deacylase (148 aa).

Positions 137–138 (GP) match the Gly-cisPro motif, important for rejection of L-amino acids motif.

Belongs to the DTD family. In terms of assembly, homodimer.

It is found in the cytoplasm. It catalyses the reaction glycyl-tRNA(Ala) + H2O = tRNA(Ala) + glycine + H(+). The enzyme catalyses a D-aminoacyl-tRNA + H2O = a tRNA + a D-alpha-amino acid + H(+). Its function is as follows. An aminoacyl-tRNA editing enzyme that deacylates mischarged D-aminoacyl-tRNAs. Also deacylates mischarged glycyl-tRNA(Ala), protecting cells against glycine mischarging by AlaRS. Acts via tRNA-based rather than protein-based catalysis; rejects L-amino acids rather than detecting D-amino acids in the active site. By recycling D-aminoacyl-tRNA to D-amino acids and free tRNA molecules, this enzyme counteracts the toxicity associated with the formation of D-aminoacyl-tRNA entities in vivo and helps enforce protein L-homochirality. The sequence is that of D-aminoacyl-tRNA deacylase from Lactiplantibacillus plantarum (strain ATCC BAA-793 / NCIMB 8826 / WCFS1) (Lactobacillus plantarum).